Here is a 346-residue protein sequence, read N- to C-terminus: Probable electron transfer flavoprotein subunit alpha, mitochondrial (346 aa).

FAD is bound at residue 285-313; sequence LYVAIGISGAIQHLAGMKESKMIIAINKD.

The protein belongs to the ETF alpha-subunit/FixB family. As to quaternary structure, heterodimer of an alpha and a beta subunit. The cofactor is FAD.

Its subcellular location is the mitochondrion matrix. Functionally, the electron transfer flavoprotein serves as a specific electron acceptor for several dehydrogenases, including five acyl-CoA dehydrogenases, glutaryl-CoA and sarcosine dehydrogenase. It transfers the electrons to the main mitochondrial respiratory chain via ETF-ubiquinone oxidoreductase (ETF dehydrogenase). This chain is Probable electron transfer flavoprotein subunit alpha, mitochondrial (ETF1), found in Cryptococcus gattii serotype B (strain WM276 / ATCC MYA-4071) (Filobasidiella gattii).